The primary structure comprises 297 residues: 1D-myo-inositol 2-acetamido-2-deoxy-alpha-D-glucopyranoside deacetylase (297 aa).

Zn(2+) contacts are provided by His-11, Asp-14, and His-154.

Belongs to the MshB deacetylase family. Zn(2+) is required as a cofactor.

It catalyses the reaction 1D-myo-inositol 2-acetamido-2-deoxy-alpha-D-glucopyranoside + H2O = 1D-myo-inositol 2-amino-2-deoxy-alpha-D-glucopyranoside + acetate. Its function is as follows. Catalyzes the deacetylation of 1D-myo-inositol 2-acetamido-2-deoxy-alpha-D-glucopyranoside (GlcNAc-Ins) in the mycothiol biosynthesis pathway. The protein is 1D-myo-inositol 2-acetamido-2-deoxy-alpha-D-glucopyranoside deacetylase of Tsukamurella paurometabola (strain ATCC 8368 / DSM 20162 / CCUG 35730 / CIP 100753 / JCM 10117 / KCTC 9821 / NBRC 16120 / NCIMB 702349 / NCTC 13040) (Corynebacterium paurometabolum).